We begin with the raw amino-acid sequence, 96 residues long: MGNCRSKQESHPICPNTQTPEPTEAEFRRAAVNSLYGRYNCKCCWFADRNLINCSDHYLCLRCLNVMLRTSNLCNICWKPLPTRISVPTEPTAPSE.

The span at 1–10 shows a compositional bias: basic and acidic residues; it reads MGNCRSKQES. The tract at residues 1-21 is disordered; sequence MGNCRSKQESHPICPNTQTPE. G2 is lipidated: N-myristoyl glycine; by host. Residues 41–77 form an RING-type; atypical zinc finger; sequence CKCCWFADRNLINCSDHYLCLRCLNVMLRTSNLCNIC. The PTAP/PSAP motif signature appears at 91–94; sequence PTAP.

It belongs to the arenaviridae Z protein family. In terms of assembly, interacts with protein NP; this interaction probably directs the encapsidated genome to budding sites. Interacts (via RING domain) with polymerase L; this interaction inhibits viral transcription and replication, Z partially blocks the product exit tunnel for the releasing nascent RNA product. Interacts with the glycoprotein complex; this interaction plays a role in virion budding. Interacts with host eIF4E; this interaction results in eIF4E reduced affinity for its substrate, the 5'-m7 G cap structure. Interacts (via late-budding domain) with host TSG101; this interaction is essential for budding and release of viral particles. Interacts with host RPLP0; this interaction may serve to load ribosome-like particles inside the virion. Interacts with host PML; this interaction induces PML bodies redistribution in the cytoplasm upon viral infection. Post-translationally, myristoylation is required for the role of RING finger protein Z in assembly and budding.

It is found in the virion. It localises to the host cytoplasm. The protein resides in the host perinuclear region. The protein localises to the host cell membrane. Its function is as follows. Plays a crucial role in virion assembly and budding. Expressed late in the virus life cycle, it acts as an inhibitor of viral transcription and RNA synthesis by interacting with the viral polymerase L. Presumably recruits the NP encapsidated genome to cellular membranes at budding sites via direct interaction with NP. Plays critical roles in the final steps of viral release by interacting with host TSG101, a member of the vacuolar protein-sorting pathway and using other cellular host proteins involved in vesicle formation pathway. The budding of the virus progeny occurs after association of protein Z with the viral glycoprotein complex SSP-GP1-GP2 at the cell periphery, step that requires myristoylation of protein Z. Also selectively represses protein production by associating with host eIF4E. In cell-based minigenome assay, has an inhibitory effect on the ribonucleoprotein machinery (vRNP), which is responsible for the replication and transcription of the viral genome. This Hylaeamys megacephalus (Large-headed rice rat) protein is RING finger protein Z.